We begin with the raw amino-acid sequence, 184 residues long: Ribosome-recycling factor (184 aa).

The protein belongs to the RRF family.

It localises to the cytoplasm. Responsible for the release of ribosomes from messenger RNA at the termination of protein biosynthesis. May increase the efficiency of translation by recycling ribosomes from one round of translation to another. This is Ribosome-recycling factor from Borrelia turicatae (strain 91E135).